Reading from the N-terminus, the 217-residue chain is Enoyl-CoA-hydratase (217 aa).

It belongs to the enoyl-CoA hydratase/isomerase family.

It catalyses the reaction a (3S)-3-hydroxyacyl-CoA = a (2E)-enoyl-CoA + H2O. The enzyme catalyses a 4-saturated-(3S)-3-hydroxyacyl-CoA = a (3E)-enoyl-CoA + H2O. The protein operates within antibiotic biosynthesis; vancomycin biosynthesis. Involved in the biosynthesis of the nonproteinogenic amino acid monomer (S)-3,5-dihydroxyphenylglycine (Dpg) responsible of the production of vancomycin and teicoplanin antibiotics. Catalyzes the syn-addition of a water molecule across the double bond of a trans-2-enoyl-CoA thioester, resulting in the formation of a beta-hydroxyacyl-CoA thioester. Physiologically, DpgB could act as a dehydratase, facilitating the aromatization of the DPA-S-DgpA or DPA-S-CoA intermediate. The chain is Enoyl-CoA-hydratase (dpgB) from Amycolatopsis orientalis (Nocardia orientalis).